The sequence spans 123 residues: Gamma-synuclein (123 aa).

2 repeat units span residues Glu-20 to Ala-30 and Glu-31 to Gly-41. Residues Glu-20–Ser-67 form a 4 X 11 AA tandem repeats of [EGSA]-K-T-K-[EQ]-[GQ]-V-X(4) region. One copy of the 3; approximate repeat lies at Thr-42–Ala-56. The stretch at Glu-57–Ser-67 is repeat 4. Phosphoserine is present on residues Ser-67 and Ser-72. The disordered stretch occupies residues Gly-93 to Asp-123. A compositionally biased stretch (basic and acidic residues) spans Gln-107–Asp-123. Ser-120 carries the phosphoserine; by BARK1, CaMK2 and CK2 modification.

The protein belongs to the synuclein family. As to quaternary structure, may be a centrosome-associated protein. Interacts with MYOC; affects its secretion and its aggregation. In terms of processing, phosphorylated. Phosphorylation by GRK5 appears to occur on residues distinct from the residue phosphorylated by other kinases. As to expression, specifically expressed in the peripheral nervous system. High expression in motoneurons of the brainstem. Also found in neurons of many other brain regions including the cerebellar cortex, thalamus, hypothalamus and CA1, CA2, CA3 and CA4 regions of the hippocampus.

Its subcellular location is the cytoplasm. The protein resides in the perinuclear region. It is found in the cytoskeleton. The protein localises to the microtubule organizing center. It localises to the centrosome. Its subcellular location is the spindle. Its function is as follows. Plays a role in neurofilament network integrity. May be involved in modulating axonal architecture during development and in the adult. In vitro, increases the susceptibility of neurofilament-H to calcium-dependent proteases. May also function in modulating the keratin network in skin. Activates the MAPK and Elk-1 signal transduction pathway. The polypeptide is Gamma-synuclein (Sncg) (Rattus norvegicus (Rat)).